Here is a 350-residue protein sequence, read N- to C-terminus: Sodium/calcium exchanger MaX1 (350 aa).

10 consecutive transmembrane segments (helical) span residues 4–24 (VNFLILLLGLVFLVKGSDYFV), 39–59 (FVIGLTLVAIGTSIPELASSI), 69–89 (IVIGNVVGSNIANVGLIVGVA), 101–121 (MLKRDGYIMLFSAVLFFVFAF), 125–145 (LSMLEAGLFVLLYIAYVFFLF), 202–222 (GGFAKDIFTLVLSCAAIVIGA), 242–264 (VIGTTLVAVGTSLPELVVTVSAA), 276–296 (VIGSNITNIFLILGLSGLFYP), 302–322 (MSLFFTTPVMIAISLILLIFI), and 330–350 (RWEGVVLMMFYVAFLVVLFYI).

This sequence belongs to the Ca(2+):cation antiporter (CaCA) (TC 2.A.19) family.

It localises to the cell membrane. Its activity is regulated as follows. Calcium transport is inhibited by Na(+), K(+), Li(+), Mg(2+) or Mn(2+). In terms of biological role, catalyzes Na(+)/Ca(2+) exchange. The transport is electrogenic with a likely stoichiometry of 3 or more Na(+) for each Ca(2+). Is K(+)-independent. The protein is Sodium/calcium exchanger MaX1 (maX1) of Methanosarcina acetivorans (strain ATCC 35395 / DSM 2834 / JCM 12185 / C2A).